We begin with the raw amino-acid sequence, 547 residues long: MRLRNGTFLTVLLFGLCGLISLSWYTAFSNSKGNVVDIYQREFLALRDRLHSAEQENLKRSKELNLVLDEIKRAIAEKQALRDINRTWSSLSDETKLKLWNVTSSKNVLQLPSIFHHLPHLLAKESSLQPAVHIGQGRTGVSIVLGVPSVKREVHSYLTDTLSSLMTELSPAEKEDCVIVVFIAETDQQYANSVADNLKRLFPGEIQSGLLEIISPSVHFYPDFSHLKESFGDPKERVRWRTKQNLDYCFLMMYAQTKGNYYVQLEDDIVARPNYFTTMKNFALQQPSEEWMILEFSQLGFIGKMFKSLDLPLIVEFMLMFYKDKPIDWLLDHIMWVKVCNPEKDAKHCDRQKANLRIRFKPSLFQHVGTHSSLAGKIQKLKDKDFGKQTLHKGHANPLAEVTTSLKTYQHFTLEKAYLGEDFFWAFTPVAGDFIRIRFFTPVRVERYFFRSGNIEHPGDKLFNTTVEVLPFDNIQSEKEALKEGREKTPKYQRTEDGFIRIGKFENGIAEGEVDASFGPLEALRLSVLTDSPVWVILSEIFIKKAE.

At 1–7 (MRLRNGT) the chain is on the cytoplasmic side. The helical; Signal-anchor for type II membrane protein transmembrane segment at 8 to 28 (FLTVLLFGLCGLISLSWYTAF) threads the bilayer. Over 29-547 (SNSKGNVVDI…LSEIFIKKAE (519 aa)) the chain is Lumenal. The stretch at 36-83 (VDIYQREFLALRDRLHSAEQENLKRSKELNLVLDEIKRAIAEKQALRD) forms a coiled coil. Asn85, Asn101, and Asn464 each carry an N-linked (GlcNAc...) asparagine glycan.

This sequence belongs to the glycosyltransferase 54 family. Requires a divalent metal cation as cofactor. N-glycosylated.

The protein localises to the golgi apparatus membrane. The catalysed reaction is N(4)-{beta-D-GlcNAc-(1-&gt;2)-alpha-D-Man-(1-&gt;3)-[beta-D-GlcNAc-(1-&gt;2)-alpha-D-Man-(1-&gt;6)]-beta-D-Man-(1-&gt;4)-beta-D-GlcNAc-(1-&gt;4)-beta-D-GlcNAc}-L-asparaginyl-[protein] + UDP-N-acetyl-alpha-D-glucosamine = N(4)-{beta-D-GlcNAc-(1-&gt;2)-[beta-D-GlcNAc-(1-&gt;4)]-alpha-D-Man-(1-&gt;3)-[beta-D-GlcNAc-(1-&gt;2)-alpha-D-Man-(1-&gt;6)]-beta-D-Man-(1-&gt;4)-beta-D-GlcNAc-(1-&gt;4)-beta-D-GlcNAc}-L-asparaginyl-[protein] + UDP + H(+). It catalyses the reaction an N(4)-{beta-D-GlcNAc-(1-&gt;2)-alpha-D-Man-(1-&gt;3)-[alpha-D-Man-(1-&gt;6)]-beta-D-Man-(1-&gt;4)-beta-D-GlcNAc-(1-&gt;4)-beta-D-GlcNAc}-L-asparaginyl-[protein] + UDP-N-acetyl-alpha-D-glucosamine = an N(4)-{beta-D-GlcNAc-(1-&gt;2)-[beta-D-GlcNAc-(1-&gt;4)]-alpha-D-Man-(1-&gt;3)-[alpha-D-Man-(1-&gt;6)]-beta-D-Man-(1-&gt;4)-beta-D-GlcNAc-(1-&gt;4)-beta-D-GlcNAc}-L-asparaginyl-[protein] + UDP + H(+). It carries out the reaction an N(4)-{beta-D-GlcNAc-(1-&gt;2)-alpha-D-Man-(1-&gt;3)-[beta-D-GlcNAc-(1-&gt;2)-[beta-D-GlcNAc-(1-&gt;6)]-alpha-D-Man-(1-&gt;6)]-beta-D-Man-(1-&gt;4)-beta-D-GlcNAc-(1-&gt;4)-beta-D-GlcNAc}-L-asparaginyl-[protein] + UDP-N-acetyl-alpha-D-glucosamine = an N(4)-{beta-D-GlcNAc-(1-&gt;2)-[beta-D-GlcNAc-(1-&gt;4)]-alpha-D-Man-(1-&gt;3)-[beta-D-GlcNAc-(1-&gt;2)-[beta-D-GlcNAc-(1-&gt;6)]-alpha-D-Man-(1-&gt;6)]-beta-D-Man-(1-&gt;4)-beta-D-GlcNAc-(1-&gt;4)-beta-D-GlcNAc}-L-asparaginyl-[protein] + UDP + H(+). The enzyme catalyses an N(4)-{beta-D-GlcNAc-(1-&gt;2)-alpha-D-Man-(1-&gt;3)-[beta-D-GlcNAc-(1-&gt;2)-alpha-D-Man-(1-&gt;6)]-beta-D-Man-(1-&gt;4)-beta-D-GlcNAc-(1-&gt;4)-[alpha-L-Fuc-(1-&gt;6)]-beta-D-GlcNAc}-L-asparaginyl-[protein] + UDP-N-acetyl-alpha-D-glucosamine = N(4)-{beta-D-GlcNAc-(1-&gt;2)-[beta-D-GlcNAc-(1-&gt;4)]-alpha-D-Man-(1-&gt;3)-[beta-D-GlcNAc-(1-&gt;2)-alpha-D-Man-(1-&gt;6)]-beta-D-Man-(1-&gt;4)-beta-D-GlcNAc-(1-&gt;4)-[alpha-L-Fuc-(1-&gt;6)]-beta-D-GlcNAc}-asparaginyl-[protein] + UDP + H(+). The catalysed reaction is an N(4)-{beta-D-GlcNAc-(1-&gt;2)-alpha-D-Man-(1-&gt;3)-[beta-D-Gal-(1-&gt;4)-beta-D-GlcNAc-(1-&gt;2)-alpha-D-Man-(1-&gt;6)]-beta-D-Man-(1-&gt;4)-beta-D-GlcNAc-(1-&gt;4)-beta-D-GlcNAc}-L-asparaginyl-[protein] + UDP-N-acetyl-alpha-D-glucosamine = an N(4)-{beta-D-GlcNAc-(1-&gt;2)-[beta-D-GlcNAc-(1-&gt;4)]-alpha-D-Man-(1-&gt;3)-[beta-D-Gal-(1-&gt;4)-beta-D-GlcNAc-(1-&gt;2)-alpha-D-Man-(1-&gt;6)]-beta-D-Man-(1-&gt;4)-beta-D-GlcNAc-(1-&gt;4)-beta-D-GlcNAc}-L-asparaginyl-[protein] + UDP + H(+). It catalyses the reaction N(4)-{beta-D-GlcNAc-(1-&gt;2)-alpha-D-Man-(1-&gt;3)-[alpha-D-Man-(1-&gt;3)-{alpha-D-Man-(1-&gt;6)}-alpha-D-Man-(1-&gt;6)]-beta-D-Man-(1-&gt;4)-beta-D-GlcNAc-(1-&gt;4)-beta-D-GlcNAc}-asparaginyl-[protein] + UDP-N-acetyl-alpha-D-glucosamine = N(4)-{beta-D-GlcNAc-(1-&gt;2)-[beta-D-GlcNAc-(1-&gt;4)]-alpha-D-Man-(1-&gt;3)-[alpha-D-Man-(1-&gt;3)-{alpha-D-Man-(1-&gt;6)}-alpha-D-Man-(1-&gt;6)]-beta-D-Man-(1-&gt;4)-beta-D-GlcNAc-(1-&gt;4)-beta-D-GlcNAc}-asparaginyl-[protein] + UDP + H(+). It carries out the reaction N(4)-{beta-D-GlcNAc-(1-&gt;2)-alpha-D-Man-(1-&gt;3)-beta-D-Man-(1-&gt;4)-beta-D-GlcNAc-(1-&gt;4)-beta-D-GlcNAc}-asparaginyl-[protein] + UDP-N-acetyl-alpha-D-glucosamine = N(4)-{beta-D-GlcNAc-(1-&gt;2)-[beta-D-GlcNAc-(1-&gt;4)]-alpha-D-Man-(1-&gt;3)-beta-D-Man-(1-&gt;4)-beta-D-GlcNAc-(1-&gt;4)-beta-D-GlcNAc}-asparaginyl-[protein] + UDP + H(+). It participates in protein modification; protein glycosylation. Glycosyltransferase that catalyze the transfer of GlcNAc from UDP-GlcNAc to the GlcNAcbeta1-2Manalpha1-3 arm of the core structure of N-linked glycans through a beta1-4 linkage and participates in the production of tri- and tetra-antennary N-linked sugar chains. Prefers complex-type N-glycans over hybrid-types. Has lower affinities for donors or acceptors than MGAT4A, suggesting that, under physiological conditions, it is not the main contributor in N-glycan biosynthesis. This chain is Alpha-1,3-mannosyl-glycoprotein 4-beta-N-acetylglucosaminyltransferase B (mgat4bQ9UQ53), found in Danio rerio (Zebrafish).